Consider the following 276-residue polypeptide: Octanoyltransferase LipM (276 aa).

Positions 32-247 (GEIDPVIRFY…GFKKGLNIEL (216 aa)) constitute a BPL/LPL catalytic domain. C149 serves as the catalytic Acyl-thioester intermediate.

The protein belongs to the octanoyltransferase LipM family. Monomer.

The enzyme catalyses octanoyl-[ACP] + L-lysyl-[protein] = N(6)-octanoyl-L-lysyl-[protein] + holo-[ACP] + H(+). Its pathway is protein modification; protein lipoylation via endogenous pathway; protein N(6)-(lipoyl)lysine from octanoyl-[acyl-carrier-protein]. In terms of biological role, catalyzes the transfer of endogenously produced octanoic acid from octanoyl-acyl-carrier-protein onto the lipoyl domain of GcvH, an intermediate carrier during protein lipoylation. This Staphylococcus aureus (strain NCTC 8325 / PS 47) protein is Octanoyltransferase LipM.